Reading from the N-terminus, the 280-residue chain is 2-C-methyl-D-erythritol 4-phosphate cytidylyltransferase (280 aa).

This sequence belongs to the IspD/TarI cytidylyltransferase family. IspD subfamily.

The catalysed reaction is 2-C-methyl-D-erythritol 4-phosphate + CTP + H(+) = 4-CDP-2-C-methyl-D-erythritol + diphosphate. It participates in isoprenoid biosynthesis; isopentenyl diphosphate biosynthesis via DXP pathway; isopentenyl diphosphate from 1-deoxy-D-xylulose 5-phosphate: step 2/6. Its function is as follows. Catalyzes the formation of 4-diphosphocytidyl-2-C-methyl-D-erythritol from CTP and 2-C-methyl-D-erythritol 4-phosphate (MEP). This Psychrobacter cryohalolentis (strain ATCC BAA-1226 / DSM 17306 / VKM B-2378 / K5) protein is 2-C-methyl-D-erythritol 4-phosphate cytidylyltransferase.